The sequence spans 1012 residues: DNA polymerase gamma (1012 aa).

The protein belongs to the DNA polymerase type-A family. The cofactor is Mg(2+).

It is found in the mitochondrion. It catalyses the reaction DNA(n) + a 2'-deoxyribonucleoside 5'-triphosphate = DNA(n+1) + diphosphate. Involved in the replication of mitochondrial DNA. This is DNA polymerase gamma (MIP1) from Komagataella pastoris (Yeast).